Here is a 1694-residue protein sequence, read N- to C-terminus: Homeobox-DDT domain protein RLT2 (1694 aa).

The tract at residues 1-24 is disordered; sequence MEGGSEKTTPEGCGGESKSKRKMK. A DNA-binding region (homeobox) is located at residues 17–76; the sequence is SKSKRKMKTAAQLEVLENTYSAEPYPSEAIRADLSVKLNLSDRQLQMWFCHRRLKERKST. One can recognise a DDT domain in the interval 514–573; sequence DENVANLLMVWRFLITFADVLGLWPFTLDEFAQAFHDYDPRLMGEIHIVLLKTIIKDIEG. Residues 696 to 765 enclose the HTH HARE-type domain; the sequence is GTVKFAAFHV…APSTYCVRAS (70 aa). Residues 795–816 are compositionally biased toward acidic residues; sequence EDVDDAERDEDSESDVGEDPEV. Disordered regions lie at residues 795 to 822, 1450 to 1541, 1555 to 1639, and 1655 to 1674; these read EDVDDAERDEDSESDVGEDPEVDVNLKK, KQEE…ICNE, AKTS…MNMK, and EDSYGRKQHGISISNDAATR. 2 positions are modified to phosphoserine: Ser-806 and Ser-808. Residues 1459–1470 are compositionally biased toward gly residues; it reads GLGGVSSSGRGG. Basic residues-rich tracts occupy residues 1471–1485 and 1515–1531; these read RPPRGRGRPRARGNG and GGRKNGRRSGTKGRKRP. Acidic residues-rich tracts occupy residues 1561–1578, 1589–1605, and 1624–1635; these read DNDDDWIETPELQDDDGE, EDYDDDDVMAPIDDFDG, and DEYEEEEEEEED.

Interacts with CHR11. Interacts (via the DDT domain) with CHR11 (via C-terminus). Highly expressed in growing tissues such as inflorescence and flower meristems, young leaves and floral organs. Expressed in roots, rosette and cauline leaves, stems, flowers, inflorescences and siliques.

The protein localises to the nucleus. Its function is as follows. Transcriptional regulator required for the maintenance of the plant vegetative phase. In association with CHR11 or CHR17 may prevent the early activation of the vegetative-to-reproductive transition by regulating key genes that contribute to flower timing, such as FT, SEP1, SEP3, AGL8/FUL, SOC1 and FLC. Involved in the transcriptional regulation of seed-specific gene expression. The sequence is that of Homeobox-DDT domain protein RLT2 from Arabidopsis thaliana (Mouse-ear cress).